Reading from the N-terminus, the 229-residue chain is uncharacterized protein (229 aa).

The protein to M.pneumoniae MPN_376 central region.

This is an uncharacterized protein from Mycoplasma pneumoniae (strain ATCC 29342 / M129 / Subtype 1) (Mycoplasmoides pneumoniae).